Reading from the N-terminus, the 480-residue chain is CASP8 and FADD-like apoptosis regulator (480 aa).

DED domains lie at 1–73 and 92–170; these read MSAE…RILK and DYRV…KIQK. Residues 1-195 form an interaction with CASP8 region; the sequence is MSAEVIHQVE…LQAAIQKSFK (195 aa). The interval 1–227 is interaction with FADD; it reads MSAEVIHQVE…GTQQEPVKKS (227 aa). Positions 1–305 are interaction with CASP8 propeptide; it reads MSAEVIHQVE…FACMPEHRDY (305 aa). The tract at residues 1 to 435 is not proteolytically processed and involved in apoptosis inhibition; the sequence is MSAEVIHQVE…CLSQKLRQER (435 aa). Residues 192–435 are interaction with CASP3; the sequence is KSFKDPSNNF…CLSQKLRQER (244 aa). The tract at residues 192 to 480 is interaction with TRAF1 and TRAF2; the sequence is KSFKDPSNNF…LRKKLIPSYT (289 aa). The tract at residues 217–480 is interaction with CASP8 subunits p18 and p10; that stretch reads LGTQQEPVKK…LRKKLIPSYT (264 aa). A caspase region spans residues 263–358; that stretch reads ETELLRDTFT…AGKPKIFFIQ (96 aa). The segment at 370-480 is interaction with CASP8; sequence SSLLEVDGPA…LRKKLIPSYT (111 aa).

This sequence belongs to the peptidase C14A family. TNFRSF6 stimulation triggers recruitment to the death-inducing signaling complex (DISC) formed by TNFRSF6, FADD and CASP8. A proteolytic fragment (p43) stays associated with the DISC. Interacts with RIPK1. In terms of processing, proteolytically processed by CASP8 generating subunit p43 and p12.

Apoptosis regulator protein which may function as a crucial link between cell survival and cell death pathways in mammalian cells. Acts as an inhibitor of TNFRSF6 mediated apoptosis. A proteolytic fragment (p43) is likely retained in the death-inducing signaling complex (DISC) thereby blocking further recruitment and processing of caspase-8 at the complex. Full length and shorter isoforms have been shown either to induce apoptosis or to reduce TNFRSF-triggered apoptosis. Lacks enzymatic (caspase) activity. The polypeptide is CASP8 and FADD-like apoptosis regulator (CFLAR) (Pongo abelii (Sumatran orangutan)).